The following is a 210-amino-acid chain: RNA binding protein, mRNA processing factor 2 (210 aa).

Residues 1 to 10 (MSNLKPDVEH) show a composition bias toward basic and acidic residues. Residues 1–25 (MSNLKPDVEHCTGAGTGTGTGPSGP) form a disordered region. Position 2 is an N-acetylserine (Ser2). Positions 31 to 108 (RTLFVSGLPV…QTLRLEFAKA (78 aa)) constitute an RRM domain. The segment at 41-51 (DIKPRELYLLF) is important for homodimerization.

In terms of assembly, homodimer. Interacts with EEF2.

The protein localises to the cytoplasm. It is found in the nucleus. It localises to the stress granule. Functionally, RNA-binding protein involved in the regulation of smooth muscle cell differentiation and proliferation in the gastrointestinal system. Binds NOG mRNA, the major inhibitor of the bone morphogenetic protein (BMP) pathway. Mediates an increase of NOG mRNA levels, thereby contributing to the negative regulation of BMP signaling pathway and promoting reversible dedifferentiation and proliferation of smooth muscle cells. Acts as a pre-mRNA alternative splicing regulator. Mediates ACTN1 and FLNB alternative splicing. Likely binds to mRNA tandem CAC trinucleotide or CA dinucleotide motifs. The polypeptide is RNA binding protein, mRNA processing factor 2 (Rbpms2) (Rattus norvegicus (Rat)).